The sequence spans 1929 residues: MASAIALSSSTAQNKITLKSVASRLQQTDDPDIRVWSQSVGFHLQFSNWKCANAFCRFVTDAYNLTPYKECARSITRQLTSLSNYLSAQTGVSVSGTQFLLSPSDVEVPVAKTGESVSDIMVPSYSVNGTSMEFDSMAQLAQALTTGFTFSVNDAQIGNAPAQTGESVSGTGFIAEACPSCALYDKCPNCTSELINDDGSSQSPGDIPHWTHHKIASGIVNILSSDMSSMEDDDFANIAAHVKKALGTNSHPANNDMSKDQLNWLLNIAEASLIRKADRTALPMNAARIAARRGWREKLFNEPADKLYTLLRKSKDSFQKSAIWGILFEKASNAKHYTEIVFQDIVKLIKEECNPSNNFYFKVMAQSFLDHFRMLVIDNPDPVANLPKFILKLKPLNLKMIIENHENTAEGWIVTLTAVAELYGWLEFAVDLVPKIVSELYDLLTSATQKCFSMVRELLTNLNILKAESFDFTNPFWYALAALLSYFVTGFLPNNAKCSAIKQTLNGATTLVAGITAIQKLAAMFSAWSNESVVDDLSTKVIGLTEADNPTVTQDIDAVTNLQIMAEQLKDQIKLKTLDPTFQPYLPVLRNLMSTTDSVISHCAKRKALATQRTAPVCIILTGPAGCGKTTLAYAIANRLSAQKPSVLNLNIDHHDAYTGNEVCIIDEFDSNPDSKFVEFVVEMVNTNPMLLNCDLIENKGKTFSSKYVIMTSNNETPVKPNSTRAPPFYRRVRIIDVTNPGVMSFKYENPGQEVPSYLFSNDFNHLSMSMRGFGAFSKTRVIDPEGRKTCGLEGPPGQRVDVDDIVRYMQRMYRENQMNFKSEAGNNRLKTPRFAFVTQRKHVDTVYKILAAAKTTYNGYYSLTKDSFDVNEGHNIGSSVFVVGDDKEIPHNCKIFRCNHLAMFRHPELAHIEGDNFRAALGVTMSDQDVTLMFYHIRGKHIQDEVRLDELPANHHIVTVHSVYDMAWALNRHLSLTGKWQALKAVYDLYMTPDILPAALRHWMDNTKFSSDHVVTQFIVPGGTIILETCNGARMWATSRRLIRAGGISNNNGPEGGFRFGSIAPRDIPWSEILREFLNLISLIWSRVKGATIVLTALLLYMKRYKPRSEAKGKTKGGRGAIRHGGKGIVLSDDEYDEWREFNMEKRMDMSVDEFLMLKHRAALGSDDTGAIQFRSWWTARQMRESTGLDHDDVTVIGKGGVRHEVHRTEIMKAPKQKKKSFAWGEDMYAEGDGKIVNHVNAIVPVTGLCGEHIGYAVHIGHGKCISLKHVLKTGSYVFNQKPIDVTFDGELAHFQIQQPPSSAAPVTFSSKPTRDPWGRSVSTEWKHDTYNTTAGKMYGSICWTATRTQPGDCGLPYVDRAGQVVGLHAGSGGDSAPGRKIVIPVTKFKLPSNTVLSNRFWKEEAPTISYKGLTVQETGVNKAVLKGTNYHVSPAHVDDYQDCTHQPANLGAQDERYPVSLTSIVINNLEPYKQPTQGPPTEVLNKAYNMLVQHYEPLIPKATTHLEMGDAFAALNVKTSCGPYITGRKKDHIDPETGKWDETLRNHINARWSLATQGVPIPHEYQLGLKDELRPKDKIAVGKRRLIWGCDVGVAVVAASAFKEVSSAIMAMSEFDFIQVGINMDGTAVETLYKRLYTPGTHRYCVDYSKWDSTQPPNVTRMSLELLRHFTDKSPVVDSAVATLSSPSIAVFGGVSFKTNGGLPSGMPLTSILNSLNHCLLVGSAIIQVLESKGVDVNWNIYDTIDLFTYGDDGVYIVPNFVHSVMPEVFSCLSSYGLKPTRTDKSSAPITEIPLSEPIEFLKRQFVRNQFGVRALLDRSSLIRQFYYIKGKNTMEWTKPPEQIDLTSRTAQLQVVMLYASQHGREFYKKCLDYYQLAMEYEGIKLDAPTYDEALAKYNANFNGVEDCDLLPAGYDEHRLDKIVFEN.

The 157-residue stretch at 597 to 753 (DSVISHCAKR…MSFKYENPGQ (157 aa)) folds into the SF3 helicase domain. An ATP-binding site is contributed by 623–630 (GPAGCGKT). Residue tyrosine 1137 is modified to O-(5'-phospho-RNA)-tyrosine. The 157-residue stretch at 1235 to 1391 (GKIVNHVNAI…KIVIPVTKFK (157 aa)) folds into the Peptidase C24 domain. Catalysis depends on for 3CLpro activity residues histidine 1271, glutamate 1292, and cysteine 1355. The region spanning 1643 to 1768 (THRYCVDYSK…IVPNFVHSVM (126 aa)) is the RdRp catalytic domain.

Homodimer. Interacts with NTPase, protein p30 and protease-polymerase p76. As to quaternary structure, interacts with capsid protein VP1 and protease-polymerase p76. Interacts with host IEF4e; this interaction plays a role in translation of viral proteins. In terms of assembly, homooligomer. Interacts with Vpg, protein p32 and may interact with capsid protein VP1. In terms of processing, specific enzymatic cleavages in vivo yield mature proteins. Pro-Pol is first autocatalytically cleaved, then processes the whole polyprotein. Post-translationally, VPg is uridylylated by the polymerase and is covalently attached to the 5'-end of the polyadenylated genomic and subgenomic RNAs. This uridylylated form acts as a nucleotide-peptide primer for the polymerase.

It localises to the host endoplasmic reticulum membrane. The enzyme catalyses a ribonucleoside 5'-triphosphate + H2O = a ribonucleoside 5'-diphosphate + phosphate + H(+). It catalyses the reaction RNA(n) + a ribonucleoside 5'-triphosphate = RNA(n+1) + diphosphate. It carries out the reaction Endopeptidase with a preference for cleavage when the P1 position is occupied by Glu-|-Xaa and the P1' position is occupied by Gly-|-Yaa.. Functionally, together with NTPase and NS4, initiates the formation of the replication complex. Induces the proliferation of the host smooth ER membranes forming long tubular structures. These remodeled membranes probably form the viral factories that contain the replication complex. In terms of biological role, displays NTPase activity, but no helicase activity. Induces the formation of convoluted membranes derived from the host ER. These remodeled membranes probably form the viral factories that contain the replication complex. Together with NS2 and NS4, initiates the formation of the replication complex. Its function is as follows. Probable key protein responsible for the formation of membrane alterations by the virus. Induces the formation of convoluted membranes derived from the host ER. These remodeled membranes probably form the viral factories that contain the replication complex. Together with NS2 and NTPase, initiates the formation of the replication complex. Viral genome-linked protein is covalently linked to the 5'-end of the positive-strand, negative-strand genomic RNAs and subgenomic RNA. Acts as a genome-linked replication primer. May recruit ribosome to viral RNA thereby promoting viral proteins translation. Interacts with host translation initiation complex to allow the translation of viral proteins. Functionally, protease-polymerase p76 processes the polyprotein: Pro-Pol is first released by autocleavage, then all other proteins are cleaved. Cleaves host translation initiation factor eIF4G1, eIF4G2 and PABP1 thereby inducing a shutdown of host protein synthesis. This shutdown may not prevent viral mRNA from being translated since viral Vpg replaces the cap. Also functions as an RNA-directed RNA polymerase, which replicates genomic and antigenomic viral RNA by recognizing specific signals. Also transcribes a subgenomic mRNA by initiating RNA synthesis internally on antigenomic RNA. This sgRNA codes for structural proteins. Catalyzes the covalent attachment VPg with viral RNAs. In Canine calicivirus (strain 48) (CaCV), this protein is Genome polyprotein.